Consider the following 105-residue polypeptide: Integration host factor subunit alpha (105 aa).

This sequence belongs to the bacterial histone-like protein family. As to quaternary structure, heterodimer of an alpha and a beta chain.

Functionally, this protein is one of the two subunits of integration host factor, a specific DNA-binding protein that functions in genetic recombination as well as in transcriptional and translational control. The polypeptide is Integration host factor subunit alpha (Azorhizobium caulinodans (strain ATCC 43989 / DSM 5975 / JCM 20966 / LMG 6465 / NBRC 14845 / NCIMB 13405 / ORS 571)).